Reading from the N-terminus, the 1052-residue chain is Focal adhesion kinase 1 (1052 aa).

Residues 1–27 (MAAAYLDPNLNHTPNSSTKTHLGTGME) are disordered. The residue at position 2 (Ala2) is an N-acetylalanine. Phosphotyrosine is present on Tyr5. A compositionally biased stretch (polar residues) spans 10–21 (LNHTPNSSTKTH). The residue at position 13 (Thr13) is a Phosphothreonine. Phosphoserine is present on residues Ser29 and Ser54. Residues 35-355 (RVLKVFHYFE…GYCRLVNGTS (321 aa)) enclose the FERM domain. Residue Lys152 forms a Glycyl lysine isopeptide (Lys-Gly) (interchain with G-Cter in SUMO) linkage. Residue Tyr397 is modified to Phosphotyrosine; by autocatalysis. Tyr407 bears the Phosphotyrosine mark. One can recognise a Protein kinase domain in the interval 422–680 (IELGRCIGEG…ELKAQLSTIL (259 aa)). Residues 428 to 434 (IGEGQFG), Lys454, and 500 to 502 (ELC) contribute to the ATP site. The active-site Proton acceptor is the Asp546. Tyr570 bears the Phosphotyrosine mark. 2 positions are modified to phosphotyrosine; by RET and SRC: Tyr576 and Tyr577. Residue Ser580 is modified to Phosphoserine. A compositionally biased stretch (basic and acidic residues) spans 684–697 (KAQQEERMRMESRR). Disordered stretches follow at residues 684-734 (KAQQ…PSPQ) and 839-922 (LSRG…RSND). Positions 707–1052 (GSDEAPPKPS…LKMLGQTRPH (346 aa)) are interaction with TGFB1I1. Ser722 bears the Phosphoserine mark. The residue at position 732 (Ser732) is a Phosphoserine; by CDK5. The span at 839 to 849 (LSRGSIDREDG) shows a compositional bias: basic and acidic residues. Phosphoserine is present on Ser843. Residue Tyr861 is modified to Phosphotyrosine. A compositionally biased stretch (pro residues) spans 869–880 (PAAPPKKPPRPG). 2 positions are modified to phosphoserine: Ser887 and Ser910. The segment at 912-1052 (PPTANLDRSN…LKMLGQTRPH (141 aa)) is interaction with ARHGEF28. Thr914 is modified (phosphothreonine). Phosphotyrosine is present on Tyr925.

The protein belongs to the protein kinase superfamily. Tyr protein kinase family. FAK subfamily. As to quaternary structure, interacts (via first Pro-rich region) with CAS family members (via SH3 domain), including BCAR1, BCAR3, and CASS4. Interacts with NEDD9 (via SH3 domain). Interacts with GIT1. Interacts with SORBS1. Interacts with ARHGEF28. Interacts with SHB. Part of a complex composed of THSD1, PTK2/FAK1, TLN1 and VCL. Interacts with PXN and TLN1. Interacts with STAT1. Interacts with DCC. Interacts with WASL. Interacts with ARHGEF7. Interacts with GRB2 and GRB7. Component of a complex that contains at least FER, CTTN and PTK2/FAK1. Interacts with BMX. Interacts with TGFB1I1. Interacts with STEAP4. Interacts with ZFYVE21. Interacts with ESR1. Interacts with PIK3R1 or PIK3R2. Interacts with SRC, FGR, FLT4 and RET. Interacts with EPHA2 in resting cells; activation of EPHA2 recruits PTPN11, leading to dephosphorylation of PTK2/FAK1 and dissociation of the complex. Interacts with EPHA1 (kinase activity-dependent). Interacts with CD4; this interaction requires the presence of HIV-1 gp120. Interacts with PIAS1. Interacts with ARHGAP26 and SHC1. Interacts with RB1CC1; this inhibits PTK2/FAK1 activity and activation of downstream signaling pathways. Interacts with P53/TP53 and MDM2. Interacts with LPXN (via LD motif 3). Interacts with MISP. Interacts with CIB1 isoform 2. Interacts with CD36. Interacts with EMP2; regulates PTK2 activation and localization. Interacts with DSCAM. Interacts with AMBRA1. Interacts (when tyrosine-phosphorylated) with tensin TNS1; the interaction is increased by phosphorylation of TNS1. In terms of processing, phosphorylated on tyrosine residues upon activation, e.g. upon integrin signaling. Tyr-397 is the major autophosphorylation site, but other kinases can also phosphorylate this residue. Phosphorylation at Tyr-397 promotes interaction with SRC and SRC family members, leading to phosphorylation at Tyr-576, Tyr-577 and at additional tyrosine residues. FGR promotes phosphorylation at Tyr-397 and Tyr-576. FER promotes phosphorylation at Tyr-577, Tyr-861 and Tyr-925, even when cells are not adherent. Tyr-397, Tyr-576 and Ser-722 are phosphorylated only when cells are adherent. Phosphorylation at Tyr-397 is important for interaction with BMX, PIK3R1 and SHC1. Phosphorylation at Tyr-925 is important for interaction with GRB2. Dephosphorylated by PTPN11; PTPN11 is recruited to PTK2 via EPHA2 (tyrosine phosphorylated). Microtubule-induced dephosphorylation at Tyr-397 is crucial for the induction of focal adhesion disassembly; this dephosphorylation could be catalyzed by PTPN11 and regulated by ZFYVE21. Phosphorylation on tyrosine residues is enhanced by NTN1. Sumoylated; this enhances autophosphorylation. In terms of tissue distribution, detected in B and T-lymphocytes. Isoform 1 and isoform 6 are detected in lung fibroblasts (at protein level). Ubiquitous. Expressed in epithelial cells (at protein level).

It localises to the cell junction. It is found in the focal adhesion. The protein localises to the cell membrane. Its subcellular location is the cytoplasm. The protein resides in the perinuclear region. It localises to the cell cortex. It is found in the cytoskeleton. The protein localises to the microtubule organizing center. Its subcellular location is the centrosome. The protein resides in the nucleus. It localises to the cilium basal body. It catalyses the reaction L-tyrosyl-[protein] + ATP = O-phospho-L-tyrosyl-[protein] + ADP + H(+). Its activity is regulated as follows. Subject to autoinhibition, mediated by interactions between the FERM domain and the kinase domain. Activated by autophosphorylation at Tyr-397. This promotes interaction with SRC and phosphorylation at Tyr-576 and Tyr-577 in the kinase activation loop. Phosphorylation at Tyr-576 and Tyr-577 is required for maximal kinase activity. Inhibited by TAC544, TAE226, PF-573,228 and PF-562,271. Non-receptor protein-tyrosine kinase that plays an essential role in regulating cell migration, adhesion, spreading, reorganization of the actin cytoskeleton, formation and disassembly of focal adhesions and cell protrusions, cell cycle progression, cell proliferation and apoptosis. Required for early embryonic development and placenta development. Required for embryonic angiogenesis, normal cardiomyocyte migration and proliferation, and normal heart development. Regulates axon growth and neuronal cell migration, axon branching and synapse formation; required for normal development of the nervous system. Plays a role in osteogenesis and differentiation of osteoblasts. Functions in integrin signal transduction, but also in signaling downstream of numerous growth factor receptors, G-protein coupled receptors (GPCR), EPHA2, netrin receptors and LDL receptors. Forms multisubunit signaling complexes with SRC and SRC family members upon activation; this leads to the phosphorylation of additional tyrosine residues, creating binding sites for scaffold proteins, effectors and substrates. Regulates numerous signaling pathways. Promotes activation of phosphatidylinositol 3-kinase and the AKT1 signaling cascade. Promotes activation of MAPK1/ERK2, MAPK3/ERK1 and the MAP kinase signaling cascade. Promotes localized and transient activation of guanine nucleotide exchange factors (GEFs) and GTPase-activating proteins (GAPs), and thereby modulates the activity of Rho family GTPases. Signaling via CAS family members mediates activation of RAC1. Phosphorylates NEDD9 following integrin stimulation. Recruits the ubiquitin ligase MDM2 to P53/TP53 in the nucleus, and thereby regulates P53/TP53 activity, P53/TP53 ubiquitination and proteasomal degradation. Phosphorylates SRC; this increases SRC kinase activity. Phosphorylates ACTN1, ARHGEF7, GRB7, RET and WASL. Promotes phosphorylation of PXN and STAT1; most likely PXN and STAT1 are phosphorylated by a SRC family kinase that is recruited to autophosphorylated PTK2/FAK1, rather than by PTK2/FAK1 itself. Promotes phosphorylation of BCAR1; GIT2 and SHC1; this requires both SRC and PTK2/FAK1. Promotes phosphorylation of BMX and PIK3R1. Isoform 6 (FRNK) does not contain a kinase domain and inhibits PTK2/FAK1 phosphorylation and signaling. Its enhanced expression can attenuate the nuclear accumulation of LPXN and limit its ability to enhance serum response factor (SRF)-dependent gene transcription. In terms of biological role, isoform 6 (FRNK) does not contain a kinase domain and inhibits PTK2/FAK1 phosphorylation and signaling. Its enhanced expression can attenuate the nuclear accumulation of LPXN and limit its ability to enhance serum response factor (SRF)-dependent gene transcription. The protein is Focal adhesion kinase 1 of Homo sapiens (Human).